The following is a 416-amino-acid chain: Squamosa promoter-binding-like protein 8 (416 aa).

The tract at residues 11 to 51 is disordered; the sequence is SSCDDFGYNATPPPPPSLLPIMDQDGGGGSIQRDHHQHHNH. The SBP-type zinc-finger motif lies at 182 to 260; the sequence is PPRCQAEGCK…ADHNRRRRKS (79 aa). Residues Cys-185, Cys-190, Cys-207, His-210, Cys-227, Cys-230, His-234, and Cys-246 each contribute to the Zn(2+) site. The Bipartite nuclear localization signal signature appears at 243–259; sequence KKSCRKRLADHNRRRRK. Positions 250-299 are disordered; sequence LADHNRRRRKSKPSDGEHSGEKRRAQANKSAATKDKAGSSSKNAGIGDGF. Residues 261–273 are compositionally biased toward basic and acidic residues; the sequence is KPSDGEHSGEKRR.

In terms of tissue distribution, expressed in stems, leaf sheaths, and young panicles. Weakly expressed in ligules, auricles, and leaf sheaths at the basal region.

It is found in the nucleus. Its function is as follows. Probable transcription factor that plays an important role in building the laminar joint between leaf blade and leaf sheath boundary, thereby controlling ligule and auricle development. The protein is Squamosa promoter-binding-like protein 8 (SPL8) of Oryza sativa subsp. japonica (Rice).